Here is a 139-residue protein sequence, read N- to C-terminus: Protein AC53 (139 aa).

It is found in the host cytoplasm. The protein resides in the host nucleus. In terms of biological role, plays a role in nucleocapsid assembly. The chain is Protein AC53 (AC53) from Lepidoptera (butterflies and moths).